The primary structure comprises 512 residues: MFLVIGAILAGALFVGLLLYQLKFKRLIDLISYMPGPPVLPLVGHGHHFIGKPPHEMVKKIFEFMETYSKDQVLKVWLGPELNVLMGNPKDVEVVLGTLRFNDKAGEYKALEPWLKEGLLVSRGRKWHKRRKIITPAFHFKILDQFVDVFEKGSRDLLRNMEQDRLKHGDSGFSLYDWINLCTMDTICETAMGVSINAQSNADSEYVQAVKTISMVLHKRMFNILYRFDLTYMLTPLARAEKKALNVLHQFTEKIIVQRREELIREGSSQESSKDDADVGAKRKMAFLDILLQSTVDERPLSNLDIREEVDTFMFEGHDTTSSALMFFFYNIATHPEAQKKCFEEIRSVVGNDKSTPVSYELLNQLHYVDLCVKETLRMYPSVPLLGRKVLEDCEINGKLIPAGTNIGISPLYLGRREELFSEPNSFKPERFDVVTTAEKLNPYAYIPFSAGPRNCIGQKFAMLEIKAIVANVLRHYEVDFVGDSSEPPVLIAELILRTKDPLMFKVRERVY.

Heme contacts are provided by Glu316 and Cys456.

This sequence belongs to the cytochrome P450 family. It depends on heme as a cofactor.

The protein localises to the endoplasmic reticulum membrane. Its subcellular location is the microsome membrane. Involved in the metabolism of insect hormones and in the breakdown of synthetic insecticides. The chain is Cytochrome P450 4d1 (Cyp4d1) from Drosophila simulans (Fruit fly).